A 463-amino-acid polypeptide reads, in one-letter code: MHHPVAPVIDTVVNLAKRRGFVYPSGEIYGGTKSAWDYGPLGVELKENIKRQWWRSVVTGRDDVVGIDSSIILPREVWVASGHVDVFHDPLVESLITHKRYRADHLIEAYEAKHGHPPPNGLADIRDPETGEPGQWTQPREFNMMLKTYLGPIETEEGLHYLRPETAQGIFVNFANVVTTARKKPPFGIGQIGKSFRNEITPGNFIFRTREFEQMEMEFFVEPATAKEWHQYWIDNRLQWYIDLGIRRENLRLWEHPKDKLSHYSDRTVDIEYKFGFMGNPWGELEGVANRTDFDLSTHARHSGVDLSFYDQINDVRYTPYVIEPAAGLTRSFMAFLIDAYTEDEAPNTKGGMDKRTVLRLDPRLAPVKAAVLPLSRHADLSPKARDLGAELRKCWNIDFDDAGAIGRRYRRQDEVGTPFCVTVDFDSLQDNAVTVRERDAMTQDRVAMSSVADYLAVRLKGS.

The substrate site is built by arginine 102 and glutamate 165. Residues 197–199, 207–212, 284–285, and 328–331 contribute to the ATP site; these read RNE, FRTREF, EL, and GLTR. A substrate-binding site is contributed by 212 to 216; the sequence is FEQME. 324-328 lines the substrate pocket; that stretch reads EPAAG.

It belongs to the class-II aminoacyl-tRNA synthetase family. As to quaternary structure, homodimer.

The protein resides in the cytoplasm. It carries out the reaction tRNA(Gly) + glycine + ATP = glycyl-tRNA(Gly) + AMP + diphosphate. Catalyzes the attachment of glycine to tRNA(Gly). This is Glycine--tRNA ligase from Mycobacterium bovis (strain ATCC BAA-935 / AF2122/97).